We begin with the raw amino-acid sequence, 126 residues long: Large ribosomal subunit protein bL17 (126 aa).

The protein belongs to the bacterial ribosomal protein bL17 family. In terms of assembly, part of the 50S ribosomal subunit. Contacts protein L32.

The protein is Large ribosomal subunit protein bL17 of Laribacter hongkongensis (strain HLHK9).